Reading from the N-terminus, the 359-residue chain is Phospho-N-acetylmuramoyl-pentapeptide-transferase (359 aa).

A run of 10 helical transmembrane segments spans residues 3–23 (QIMIAVAIAVAVSILLTPALI), 55–75 (VAILAGIWAGYFGTHLAGLAF), 80–100 (ITASGLLVLGLATSLGGVGFL), 117–137 (TAKTVGQITSAVLFAVLVLQF), 156–176 (IATVTLTPALFVLFCVLVVSA), 187–207 (LDGLAAGCMAMVTGAYVLITF), 231–251 (LALIAAATAGACIGFLWWNAA), 255–275 (IFMGDTGSLALGGIIAGLSVT), 280–300 (ILAVVLGALFVAEITSVVLQI), and 334–354 (FWLLTAITCGLGVALFYGEWL).

Belongs to the glycosyltransferase 4 family. MraY subfamily. Mg(2+) is required as a cofactor.

The protein resides in the cell inner membrane. The catalysed reaction is UDP-N-acetyl-alpha-D-muramoyl-L-alanyl-gamma-D-glutamyl-meso-2,6-diaminopimeloyl-D-alanyl-D-alanine + di-trans,octa-cis-undecaprenyl phosphate = di-trans,octa-cis-undecaprenyl diphospho-N-acetyl-alpha-D-muramoyl-L-alanyl-D-glutamyl-meso-2,6-diaminopimeloyl-D-alanyl-D-alanine + UMP. Its pathway is cell wall biogenesis; peptidoglycan biosynthesis. Catalyzes the initial step of the lipid cycle reactions in the biosynthesis of the cell wall peptidoglycan: transfers peptidoglycan precursor phospho-MurNAc-pentapeptide from UDP-MurNAc-pentapeptide onto the lipid carrier undecaprenyl phosphate, yielding undecaprenyl-pyrophosphoryl-MurNAc-pentapeptide, known as lipid I. In Mycobacterium marinum (strain ATCC BAA-535 / M), this protein is Phospho-N-acetylmuramoyl-pentapeptide-transferase.